The primary structure comprises 634 residues: DNA-directed RNA polymerase subunit gamma (634 aa).

The Zn(2+) site is built by Cys74, Cys76, Cys89, and Cys92. Residues Asp471, Asp473, and Asp475 each coordinate Mg(2+).

Belongs to the RNA polymerase beta' chain family. RpoC1 subfamily. As to quaternary structure, in cyanobacteria the RNAP catalytic core is composed of 2 alpha, 1 beta, 1 beta', 1 gamma and 1 omega subunit. When a sigma factor is associated with the core the holoenzyme is formed, which can initiate transcription. Mg(2+) is required as a cofactor. The cofactor is Zn(2+).

The catalysed reaction is RNA(n) + a ribonucleoside 5'-triphosphate = RNA(n+1) + diphosphate. In terms of biological role, DNA-dependent RNA polymerase catalyzes the transcription of DNA into RNA using the four ribonucleoside triphosphates as substrates. This chain is DNA-directed RNA polymerase subunit gamma, found in Synechococcus sp. (strain CC9605).